The primary structure comprises 352 residues: fMet-Leu-Phe receptor (352 aa).

Residues 1–27 (MDSNASLPLNVSGGTQATPAGLVVLDV) lie on the Extracellular side of the membrane. N-linked (GlcNAc...) asparagine glycans are attached at residues N4 and N10. A helical transmembrane segment spans residues 28–50 (FSYLILVVTFVLGVLGNGLVIWV). Topologically, residues 51-61 (TGFRMTHTVTT) are cytoplasmic. The helical transmembrane segment at 62–83 (ISYLNLALADFSFTSTLPFFIV) threads the bilayer. The Extracellular segment spans residues 84–100 (TKALGGHWPFGWFLCKF). C98 and C178 are joined by a disulfide. The helical transmembrane segment at 101–121 (VFTIVDINLFGSVFLIALIAL) threads the bilayer. Over 122–140 (DRCICVLHPVWAQNHRNVS) the chain is Cytoplasmic. The chain crosses the membrane as a helical span at residues 141–162 (LAKKVIVGPWICALLLTLPVII). Residues 163-207 (RVTTLSHPRAPGKMACTFDWSPWTEDPAEKLKVAISMFMVRGIIR) lie on the Extracellular side of the membrane. The helical transmembrane segment at 208–228 (FIIGFSTPMSIVAVCYGLIAT) threads the bilayer. Over 229 to 244 (KIHRQGLIKSSRPLRV) the chain is Cytoplasmic. A helical membrane pass occupies residues 245-268 (LSFVVASFLLCWSPYQIAALIATV). The Extracellular segment spans residues 269-287 (RIRELLLGMGKDLRIVLDV). Residues 288 to 307 (TSFVAFFNSCLNPMLYVFMG) form a helical membrane-spanning segment. The Cytoplasmic segment spans residues 308-352 (QDFRERLIHSLPASLERALSEDSAQTSDTGTNSTSAPAEAELQAI).

This sequence belongs to the G-protein coupled receptor 1 family. Post-translationally, phosphorylated; which is necessary for desensitization. In terms of tissue distribution, neutrophils.

Its subcellular location is the cell membrane. High affinity receptor for N-formyl-methionyl peptides (fMLP), which are powerful neutrophil chemotactic factors. Binding of fMLP to the receptor stimulates intracellular calcium mobilization and superoxide anion release. This response is mediated via a G-protein that activates a phosphatidylinositol-calcium second messenger system. Receptor for TAFA4, mediates its effects on chemoattracting macrophages, promoting phagocytosis and increasing ROS release. Receptor for cathepsin CTSG, leading to increased phagocyte chemotaxis. This Oryctolagus cuniculus (Rabbit) protein is fMet-Leu-Phe receptor (FPR1).